The chain runs to 389 residues: S-adenosylmethionine synthase (389 aa).

Residue His-15 participates in ATP binding. Asp-17 lines the Mg(2+) pocket. K(+) is bound at residue Glu-43. Residues Glu-56 and Gln-99 each coordinate L-methionine. The segment at 99–109 (QSPDIAQGVNE) is flexible loop. ATP contacts are provided by residues 166 to 168 (DAK), 234 to 235 (RF), Asp-243, 249 to 250 (RK), Ala-266, and Lys-270. An L-methionine-binding site is contributed by Asp-243. Lys-274 lines the L-methionine pocket.

The protein belongs to the AdoMet synthase family. In terms of assembly, homotetramer; dimer of dimers. Requires Mg(2+) as cofactor. K(+) is required as a cofactor.

It localises to the cytoplasm. The enzyme catalyses L-methionine + ATP + H2O = S-adenosyl-L-methionine + phosphate + diphosphate. The protein operates within amino-acid biosynthesis; S-adenosyl-L-methionine biosynthesis; S-adenosyl-L-methionine from L-methionine: step 1/1. Functionally, catalyzes the formation of S-adenosylmethionine (AdoMet) from methionine and ATP. The overall synthetic reaction is composed of two sequential steps, AdoMet formation and the subsequent tripolyphosphate hydrolysis which occurs prior to release of AdoMet from the enzyme. This is S-adenosylmethionine synthase from Neisseria gonorrhoeae (strain ATCC 700825 / FA 1090).